A 212-amino-acid polypeptide reads, in one-letter code: Ribosomal RNA small subunit methyltransferase G (212 aa).

Residues Phe-78, 96-98 (ESS), 124-125 (VE), and Arg-141 contribute to the S-adenosyl-L-methionine site.

This sequence belongs to the methyltransferase superfamily. RNA methyltransferase RsmG family.

The protein resides in the cytoplasm. Its function is as follows. Specifically methylates the N7 position of a guanine in 16S rRNA. This chain is Ribosomal RNA small subunit methyltransferase G, found in Onion yellows phytoplasma (strain OY-M).